The primary structure comprises 458 residues: Siroheme synthase (458 aa).

A precorrin-2 dehydrogenase /sirohydrochlorin ferrochelatase region spans residues 1–203; it reads MDYLPLFFDL…GNLAAAEQLI (203 aa). Residues 22–23 and 43–44 each bind NAD(+); these read TI and PK. S128 is modified (phosphoserine). The interval 216-458 is uroporphyrinogen-III C-methyltransferase; it reads GEVYLVGAGP…RCHEKLNWYK (243 aa). P225 provides a ligand contact to S-adenosyl-L-methionine. The Proton acceptor role is filled by D248. Residue K270 is the Proton donor of the active site. S-adenosyl-L-methionine is bound by residues 301–303, I306, 331–332, M383, and G412; these read GGD and TA.

In the N-terminal section; belongs to the precorrin-2 dehydrogenase / sirohydrochlorin ferrochelatase family. It in the C-terminal section; belongs to the precorrin methyltransferase family.

The catalysed reaction is uroporphyrinogen III + 2 S-adenosyl-L-methionine = precorrin-2 + 2 S-adenosyl-L-homocysteine + H(+). It catalyses the reaction precorrin-2 + NAD(+) = sirohydrochlorin + NADH + 2 H(+). It carries out the reaction siroheme + 2 H(+) = sirohydrochlorin + Fe(2+). It functions in the pathway cofactor biosynthesis; adenosylcobalamin biosynthesis; precorrin-2 from uroporphyrinogen III: step 1/1. Its pathway is cofactor biosynthesis; adenosylcobalamin biosynthesis; sirohydrochlorin from precorrin-2: step 1/1. The protein operates within porphyrin-containing compound metabolism; siroheme biosynthesis; precorrin-2 from uroporphyrinogen III: step 1/1. It participates in porphyrin-containing compound metabolism; siroheme biosynthesis; siroheme from sirohydrochlorin: step 1/1. It functions in the pathway porphyrin-containing compound metabolism; siroheme biosynthesis; sirohydrochlorin from precorrin-2: step 1/1. Its function is as follows. Multifunctional enzyme that catalyzes the SAM-dependent methylations of uroporphyrinogen III at position C-2 and C-7 to form precorrin-2 via precorrin-1. Then it catalyzes the NAD-dependent ring dehydrogenation of precorrin-2 to yield sirohydrochlorin. Finally, it catalyzes the ferrochelation of sirohydrochlorin to yield siroheme. The polypeptide is Siroheme synthase (Saccharophagus degradans (strain 2-40 / ATCC 43961 / DSM 17024)).